The sequence spans 236 residues: MPPRELSEAEPPPLRAPTPPPRRRSAPPELGIKCVLVGDGAVGKSSLIVSYTCNGYPARYRPTALDTFSVQVLVDGAPVRIELWDTAGQEDFDRLRSLCYPDTDVFLACFSVVQPSSFQNITEKWLPEIRTHNPQAPVLLVGTQADLRDDVNVLIQLDQGGREGPVPQPQAQGLAEKIRACCYLECSALTQKNLKEVFDSAILSAIEHKARLEKKLNAKGVRTLSRCRWKKFFCFV.

Positions 1-27 are disordered; sequence MPPRELSEAEPPPLRAPTPPPRRRSAP. Over residues 10-20 the composition is skewed to pro residues; sequence EPPPLRAPTPP. Ser25 carries the phosphoserine modification. Residues 38 to 45, 85 to 89, and 143 to 146 contribute to the GTP site; these read GDGAVGKS, DTAGQ, and TQAD. Residue Cys234 is the site of S-palmitoyl cysteine attachment.

This sequence belongs to the small GTPase superfamily. Rho family. In terms of assembly, interacts with PAK2. Requires Mg(2+) as cofactor. Highly expressed in pancreas, placenta, and fetal brain.

It is found in the cell membrane. The protein resides in the endosome membrane. In terms of biological role, plays a role in the control of the actin cytoskeleton via activation of the JNK pathway. The chain is Rho-related GTP-binding protein RhoV from Homo sapiens (Human).